The sequence spans 152 residues: UPF0225 protein YchJ (152 aa).

Belongs to the UPF0225 family.

In Salmonella gallinarum (strain 287/91 / NCTC 13346), this protein is UPF0225 protein YchJ.